We begin with the raw amino-acid sequence, 500 residues long: DNA polymerase processivity factor (500 aa).

Residues 388–500 (VSESDDAAAE…QEPANKRGKR (113 aa)) form a disordered region. Polar residues predominate over residues 438–449 (TLQQSAQPSSPA).

It belongs to the herpesviridae DNA polymerase processivity factor family. Interacts with the DNA polymerase catalytic subunit UL30. Interacts with the origin-binding protein.

It is found in the host nucleus. Its function is as follows. Plays an essential role in viral DNA replication by acting as the polymerase accessory subunit. Associates with the viral polymerase to increase its processivity and forms high-affinity direct interactions with DNA. Facilitates the origin-binding protein UL9 loading onto DNA thus increasing its ability to assemble into a functional complex capable of unwinding duplex DNA. This Amazona oratrix (yellow-headed parrot) protein is DNA polymerase processivity factor (UL42).